A 427-amino-acid polypeptide reads, in one-letter code: Serine--tRNA ligase (427 aa).

231 to 233 is an L-serine binding site; it reads TAE. 262–264 is a binding site for ATP; sequence RSE. Glu285 is a binding site for L-serine. ATP is bound at residue 349–352; sequence EISS. Ser385 contacts L-serine.

Belongs to the class-II aminoacyl-tRNA synthetase family. Type-1 seryl-tRNA synthetase subfamily. In terms of assembly, homodimer. The tRNA molecule binds across the dimer.

The protein resides in the cytoplasm. It carries out the reaction tRNA(Ser) + L-serine + ATP = L-seryl-tRNA(Ser) + AMP + diphosphate + H(+). The catalysed reaction is tRNA(Sec) + L-serine + ATP = L-seryl-tRNA(Sec) + AMP + diphosphate + H(+). The protein operates within aminoacyl-tRNA biosynthesis; selenocysteinyl-tRNA(Sec) biosynthesis; L-seryl-tRNA(Sec) from L-serine and tRNA(Sec): step 1/1. Catalyzes the attachment of serine to tRNA(Ser). Is also able to aminoacylate tRNA(Sec) with serine, to form the misacylated tRNA L-seryl-tRNA(Sec), which will be further converted into selenocysteinyl-tRNA(Sec). The protein is Serine--tRNA ligase of Brucella canis (strain ATCC 23365 / NCTC 10854 / RM-666).